A 130-amino-acid chain; its full sequence is DNA-directed RNA polymerase subunit omega (130 aa).

Residues 80–130 (PEPDTVPLIGSAGASVDADDTEVAPERMTEEELLKGLEGLAPPEEQPEEDE) form a disordered region. The span at 103 to 114 (APERMTEEELLK) shows a compositional bias: basic and acidic residues.

Belongs to the RNA polymerase subunit omega family. As to quaternary structure, the RNAP catalytic core consists of 2 alpha, 1 beta, 1 beta' and 1 omega subunit. When a sigma factor is associated with the core the holoenzyme is formed, which can initiate transcription.

It carries out the reaction RNA(n) + a ribonucleoside 5'-triphosphate = RNA(n+1) + diphosphate. In terms of biological role, promotes RNA polymerase assembly. Latches the N- and C-terminal regions of the beta' subunit thereby facilitating its interaction with the beta and alpha subunits. This is DNA-directed RNA polymerase subunit omega from Rhodopseudomonas palustris (strain BisB18).